Consider the following 1489-residue polypeptide: ABC transporter FUM19 (1489 aa).

10 helical membrane passes run 33 to 53, 84 to 104, 116 to 136, 143 to 163, 264 to 284, 302 to 322, 373 to 393, 397 to 417, 482 to 502, and 511 to 531; these read IIFF…RIFV, CFSS…ALSY, LLSI…RTLW, LEYG…FAVW, LLLP…QAFL, WGLI…TSLY, FLNL…AWFL, VGIA…GVSI, IASL…MLAA, and HKVY…GSIF. The ABC transmembrane type-1 1 domain maps to 272-539; that stretch reads IALIGLSLAQ…IFRSVSPLMS (268 aa). One can recognise an ABC transporter 1 domain in the interval 591 to 823; sequence VKVIQASFGW…YQSHLQSLCI (233 aa). 2 N-linked (GlcNAc...) asparagine glycosylation sites follow: Asn-612 and Asn-616. Residue 625–632 participates in ATP binding; the sequence is GPVGSGKS. Asn-670 is a glycosylation site (N-linked (GlcNAc...) asparagine). Over residues 852–862 the composition is skewed to basic and acidic residues; it reads EQTRSSRRGAD. A disordered region spans residues 852–874; that stretch reads EQTRSSRRGADNQETIASGADSS. A compositionally biased stretch (polar residues) spans 863-874; that stretch reads NQETIASGADSS. 6 consecutive transmembrane segments (helical) span residues 890–910, 945–965, 977–999, 1031–1051, 1120–1140, and 1149–1169; these read AVPP…GFLY, ILAL…FALI, AITR…NYFS, AASS…LYFV, WLLF…VALV, and GFAG…TNVV. Positions 902–1187 constitute an ABC transmembrane type-1 2 domain; sequence SSLSYGFLYS…SMGAVSRLKA (286 aa). The ABC transporter 2 domain maps to 1214–1485; it reads IKIDGVSASY…KEGKFRALWE (272 aa). Position 1254–1261 (1254–1261) interacts with ATP; it reads GRTGSGKS.

The protein belongs to the ABC transporter superfamily. ABCC family. Conjugate transporter (TC 3.A.1.208) subfamily.

The protein localises to the cell membrane. In terms of biological role, ABC transporter that may provide the dual role of fumonisin export and self-protection by allowing the fungus to evade the harmful effect of its own fumonisin production. Plays a role in the repression of the gene cluster that mediates fumonisin biosynthesis. The protein is ABC transporter FUM19 of Gibberella moniliformis (strain M3125 / FGSC 7600) (Maize ear and stalk rot fungus).